The sequence spans 957 residues: ERC protein 2 (957 aa).

Residues 1 to 13 (MYGSARTITNLEG) show a composition bias toward polar residues. The interval 1–44 (MYGSARTITNLEGSPSRSPRLPRSPRLGHRRTSSGGGGGTGKTL) is disordered. The segment covering 14–25 (SPSRSPRLPRSP) has biased composition (low complexity). Phosphoserine occurs at positions 65 and 666. Residues 140–917 (RQVRDSTMLD…RMKLMADNYD (778 aa)) are a coiled coil. Residues 918–957 (DDHHHYHHHHHHHHHRSPGRSQHSNHRPSPDQDDEEGIWA) are disordered. Residues 922–943 (HYHHHHHHHHHRSPGRSQHSNH) are compositionally biased toward basic residues. Acidic residues predominate over residues 948–957 (DQDDEEGIWA).

Interacts with BSN, ERC1, PPFIA1, PPFIA2, PPFIA3 and PPFIA4. Interacts through its C-terminus with the PDZ domain of RIMS1. Part of a complex consisting of ERC2, RIMS1 and UNC13A.

The protein resides in the cytoplasm. It is found in the synapse. It localises to the presynaptic active zone. Its subcellular location is the cytoskeleton. Functionally, thought to be involved in the organization of the cytomatrix at the nerve terminals active zone (CAZ) which regulates neurotransmitter release. Seems to act together with BSN. May recruit liprin-alpha proteins to the CAZ. The chain is ERC protein 2 (ERC2) from Homo sapiens (Human).